Here is a 413-residue protein sequence, read N- to C-terminus: Transforming growth factor beta-2 proprotein (413 aa).

The first 19 residues, 1 to 19 (MHYYVLFTFLTLDLAPVAL), serve as a signal peptide directing secretion. N-linked (GlcNAc...) asparagine glycosylation is found at N72, N140, and N241. 4 cysteine pairs are disulfide-bonded: C308-C317, C316-C379, C345-C410, and C349-C412.

This sequence belongs to the TGF-beta family. Interacts with Transforming growth factor beta-2 (TGF-beta-2) chain; interaction is non-covalent and maintains (TGF-beta-2) in a latent state. As to quaternary structure, homodimer; disulfide-linked. Interacts with TGF-beta receptors (tgfbr1 and tgfbr2), leading to signal transduction. The precursor proprotein is cleaved in the Golgi apparatus to form Transforming growth factor beta-2 (TGF-beta-2) and Latency-associated peptide (LAP) chains, which remain non-covalently linked, rendering TGF-beta-2 inactive.

Its subcellular location is the secreted. The protein resides in the extracellular space. It is found in the extracellular matrix. Its function is as follows. Precursor of the Latency-associated peptide (LAP) and Transforming growth factor beta-2 (TGF-beta-2) chains, which constitute the regulatory and active subunit of TGF-beta-2, respectively. Required to maintain the Transforming growth factor beta-2 (TGF-beta-2) chain in a latent state during storage in extracellular matrix. Associates non-covalently with TGF-beta-2 and regulates its activation via interaction with 'milieu molecules', such as ltbp1 and lrrc32/garp, that control activation of TGF-beta-2. Functionally, multifunctional protein that regulates various processes such as angiogenesis and heart development. Activation into mature form follows different steps: following cleavage of the proprotein in the Golgi apparatus, Latency-associated peptide (LAP) and Transforming growth factor beta-2 (TGF-beta-2) chains remain non-covalently linked rendering TGF-beta-2 inactive during storage in extracellular matrix. At the same time, LAP chain interacts with 'milieu molecules', such as ltbp1 and lrrc32/garp, that control activation of TGF-beta-2 and maintain it in a latent state during storage in extracellular milieus. Once activated following release of LAP, TGF-beta-2 acts by binding to TGF-beta receptors (tgfbr1 and tgfbr2), which transduce signal. The polypeptide is Transforming growth factor beta-2 proprotein (tgfb2) (Xenopus laevis (African clawed frog)).